The following is a 142-amino-acid chain: Hemoglobin subunit alpha (142 aa).

At S1 the chain carries N-acetylserine. The 142-residue stretch at 1 to 142 (SLSDKDKAAV…LSLALAEKYR (142 aa)) folds into the Globin domain. The heme b site is built by H59 and H88.

It belongs to the globin family. In terms of assembly, heterotetramer of two alpha chains and two beta chains. As to expression, red blood cells.

Involved in oxygen transport from gills to the various peripheral tissues. This chain is Hemoglobin subunit alpha, found in Lycodes reticulatus (Arctic eelpout).